A 336-amino-acid chain; its full sequence is Dihydroorotate dehydrogenase (quinone) (336 aa).

Residues A62 to K66 and T86 contribute to the FMN site. K66 is a binding site for substrate. Residue N111–F115 participates in substrate binding. 2 residues coordinate FMN: N139 and N172. Substrate is bound at residue N172. Catalysis depends on S175, which acts as the Nucleophile. N177 contributes to the substrate binding site. FMN is bound by residues K217 and T245. Residue N246–T247 participates in substrate binding. FMN is bound by residues G268, G297, and Y318–S319.

The protein belongs to the dihydroorotate dehydrogenase family. Type 2 subfamily. In terms of assembly, monomer. Requires FMN as cofactor.

The protein localises to the cell membrane. It catalyses the reaction (S)-dihydroorotate + a quinone = orotate + a quinol. Its pathway is pyrimidine metabolism; UMP biosynthesis via de novo pathway; orotate from (S)-dihydroorotate (quinone route): step 1/1. Catalyzes the conversion of dihydroorotate to orotate with quinone as electron acceptor. In Yersinia enterocolitica serotype O:8 / biotype 1B (strain NCTC 13174 / 8081), this protein is Dihydroorotate dehydrogenase (quinone).